A 447-amino-acid polypeptide reads, in one-letter code: Imidazolonepropionase (447 aa).

Fe(3+) contacts are provided by histidine 85 and histidine 87. Positions 85 and 87 each coordinate Zn(2+). 3 residues coordinate 4-imidazolone-5-propanoate: arginine 94, tyrosine 157, and histidine 190. An N-formimidoyl-L-glutamate-binding site is contributed by tyrosine 157. Fe(3+) is bound at residue histidine 255. Residue histidine 255 participates in Zn(2+) binding. Glutamate 258 lines the 4-imidazolone-5-propanoate pocket. Residue aspartate 329 participates in Fe(3+) binding. Aspartate 329 serves as a coordination point for Zn(2+). N-formimidoyl-L-glutamate-binding residues include asparagine 331 and glycine 333. Position 334 (serine 334) interacts with 4-imidazolone-5-propanoate.

Belongs to the metallo-dependent hydrolases superfamily. HutI family. Zn(2+) is required as a cofactor. It depends on Fe(3+) as a cofactor.

It is found in the cytoplasm. It carries out the reaction 4-imidazolone-5-propanoate + H2O = N-formimidoyl-L-glutamate. Its pathway is amino-acid degradation; L-histidine degradation into L-glutamate; N-formimidoyl-L-glutamate from L-histidine: step 3/3. Catalyzes the hydrolytic cleavage of the carbon-nitrogen bond in imidazolone-5-propanoate to yield N-formimidoyl-L-glutamate. It is the third step in the universal histidine degradation pathway. In Shouchella clausii (strain KSM-K16) (Alkalihalobacillus clausii), this protein is Imidazolonepropionase.